Reading from the N-terminus, the 371-residue chain is Anhydro-N-acetylmuramic acid kinase (371 aa).

9–16 serves as a coordination point for ATP; that stretch reads GTSLDAVD.

The protein belongs to the anhydro-N-acetylmuramic acid kinase family.

It carries out the reaction 1,6-anhydro-N-acetyl-beta-muramate + ATP + H2O = N-acetyl-D-muramate 6-phosphate + ADP + H(+). It participates in amino-sugar metabolism; 1,6-anhydro-N-acetylmuramate degradation. The protein operates within cell wall biogenesis; peptidoglycan recycling. Functionally, catalyzes the specific phosphorylation of 1,6-anhydro-N-acetylmuramic acid (anhMurNAc) with the simultaneous cleavage of the 1,6-anhydro ring, generating MurNAc-6-P. Is required for the utilization of anhMurNAc either imported from the medium or derived from its own cell wall murein, and thus plays a role in cell wall recycling. The chain is Anhydro-N-acetylmuramic acid kinase from Caulobacter vibrioides (strain ATCC 19089 / CIP 103742 / CB 15) (Caulobacter crescentus).